Reading from the N-terminus, the 133-residue chain is Meiotically up-regulated gene 15 protein (133 aa).

The protein resides in the cytoplasm. It localises to the nucleus. Functionally, has a role in meiosis. The polypeptide is Meiotically up-regulated gene 15 protein (mug15) (Schizosaccharomyces pombe (strain 972 / ATCC 24843) (Fission yeast)).